The following is a 358-amino-acid chain: Adenosine deaminase (358 aa).

2 residues coordinate Zn(2+): H14 and H16. Residues H16, D18, and G183 each contribute to the substrate site. Residue H212 participates in Zn(2+) binding. The active-site Proton donor is the E215. Zn(2+) is bound at residue D294. Residue D295 coordinates substrate.

This sequence belongs to the metallo-dependent hydrolases superfamily. Adenosine and AMP deaminases family. Zn(2+) serves as cofactor.

The protein resides in the cell membrane. Its subcellular location is the cell junction. The protein localises to the cytoplasmic vesicle lumen. It is found in the cytoplasm. It localises to the lysosome. The enzyme catalyses adenosine + H2O + H(+) = inosine + NH4(+). It catalyses the reaction 2'-deoxyadenosine + H2O + H(+) = 2'-deoxyinosine + NH4(+). Functionally, catalyzes the hydrolytic deamination of adenosine and 2-deoxyadenosine. Plays an important role in purine metabolism and in adenosine homeostasis. Modulates signaling by extracellular adenosine, and so contributes indirectly to cellular signaling events. May act as a positive regulator of T-cell coactivation. The chain is Adenosine deaminase (ada) from Xenopus tropicalis (Western clawed frog).